The sequence spans 500 residues: NAD(P)H-quinone oxidoreductase chain 4, chloroplastic (500 aa).

The next 14 helical transmembrane spans lie at 4–24 (FPWLTILVVLPIFAGSLIFFL), 35–55 (YTIAICLLEFLIMTYAFCYHF), 87–107 (LGSILLTGFITTLATLAAWPV), 111–131 (SQLFYFLMLAMYSGQIGLFSS), 134–154 (LLLFFIMWELELIPVYLLLSM), 167–187 (FILYTAGGSIFFLIGVLGMGL), 211–231 (ILLYFGFLIAYAVKLPIIPLH), 242–262 (HYSTCMLLAGILLKMGAYGLI), 272–292 (AHYLFSPWLVIIGAVQIIYAA), 313–333 (MGFIIIGIGSITNIGLNGAIL), 334–354 (QILSHGFIGATLFFLAGTACD), 386–406 (LALPGMSGFVAELVVFFGLIT), 417–437 (LITFVMAIGMILTPIYLLSML), and 462–482 (LFLLICIFLPVIGIGIYPDFV).

This sequence belongs to the complex I subunit 4 family.

It localises to the plastid. It is found in the chloroplast thylakoid membrane. The catalysed reaction is a plastoquinone + NADH + (n+1) H(+)(in) = a plastoquinol + NAD(+) + n H(+)(out). It carries out the reaction a plastoquinone + NADPH + (n+1) H(+)(in) = a plastoquinol + NADP(+) + n H(+)(out). The polypeptide is NAD(P)H-quinone oxidoreductase chain 4, chloroplastic (Saccharum officinarum (Sugarcane)).